The chain runs to 317 residues: MSSFLRALTLRQLQIFVTVARHASFVRAAEELHLTQPAVSMQVKQLESVVGMALFERVKGQLTLTEPGDRLLHHASRILGEVKDAEEGLQAVKDVEQGSITIGLISTSKYFAPKLLAGFTALHPGVDLRIAEGNRETLLRLLQDNAIDLALMGRPPRELDAVSEPIAAHPHVLVASPRHPLHDAKGFDLQELRHETFLLREPGSGTRTVAEYMFRDHLFTPAKVITLGSNETIKQAVMAGMGISLLSLHTLGLELRTGEIGLLDVAGTPIERIWHVAHMSSKRLSPASESCRAYLLEHTAEFLGREYGGLMPGRRVA.

Positions 8-65 constitute an HTH lysR-type domain; that stretch reads LTLRQLQIFVTVARHASFVRAAEELHLTQPAVSMQVKQLESVVGMALFERVKGQLTLT. The H-T-H motif DNA-binding region spans 25–44; it reads FVRAAEELHLTQPAVSMQVK.

This sequence belongs to the LysR transcriptional regulatory family.

Functionally, trans-acting transcriptional regulator of RuBisCO genes (cfxLS) expression. This is HTH-type transcriptional regulator CfxR (cfxR) from Cupriavidus necator (strain ATCC 17699 / DSM 428 / KCTC 22496 / NCIMB 10442 / H16 / Stanier 337) (Ralstonia eutropha).